The sequence spans 396 residues: Acetate kinase (396 aa).

Position 8 (asparagine 8) interacts with Mg(2+). Lysine 15 contacts ATP. Arginine 89 lines the substrate pocket. The active-site Proton donor/acceptor is the aspartate 146. Residues 206–210, 283–285, and 331–335 contribute to the ATP site; these read HIGNG, DMR, and GVGEN. Glutamate 383 serves as a coordination point for Mg(2+).

It belongs to the acetokinase family. As to quaternary structure, homodimer. The cofactor is Mg(2+). Mn(2+) serves as cofactor.

The protein resides in the cytoplasm. It catalyses the reaction acetate + ATP = acetyl phosphate + ADP. Its pathway is metabolic intermediate biosynthesis; acetyl-CoA biosynthesis; acetyl-CoA from acetate: step 1/2. Its function is as follows. Catalyzes the formation of acetyl phosphate from acetate and ATP. Can also catalyze the reverse reaction. This Streptococcus pneumoniae (strain ATCC 700669 / Spain 23F-1) protein is Acetate kinase.